We begin with the raw amino-acid sequence, 235 residues long: Octanoyltransferase (235 aa).

Residues 28–203 (GRAEETLLLL…PFAGLPADAL (176 aa)) enclose the BPL/LPL catalytic domain. Substrate is bound by residues 66–73 (RGGDVTWH), 133–135 (SIG), and 146–148 (GFA). The active-site Acyl-thioester intermediate is cysteine 164. Positions 202–235 (ALPEQPRDAVQPSSCDDVHAPSTTSRRPPCPLTV) are disordered.

The protein belongs to the LipB family.

The protein resides in the cytoplasm. The catalysed reaction is octanoyl-[ACP] + L-lysyl-[protein] = N(6)-octanoyl-L-lysyl-[protein] + holo-[ACP] + H(+). It participates in protein modification; protein lipoylation via endogenous pathway; protein N(6)-(lipoyl)lysine from octanoyl-[acyl-carrier-protein]: step 1/2. Catalyzes the transfer of endogenously produced octanoic acid from octanoyl-acyl-carrier-protein onto the lipoyl domains of lipoate-dependent enzymes. Lipoyl-ACP can also act as a substrate although octanoyl-ACP is likely to be the physiological substrate. The chain is Octanoyltransferase from Geobacter sulfurreducens (strain ATCC 51573 / DSM 12127 / PCA).